A 225-amino-acid polypeptide reads, in one-letter code: MAGHDSGNARRGRASFGAFVRKPVERDAVANAGQAAEQGSLEEAQAWPDDAVEVGAVVDAYGLKGWVKVATHADAGRGGDALLKARHWWLERGAERLSVRIMQSKAHSDTVVAQPAGVSDRDAAFAMRGFRVFVRREDFPALAADEFYWVDLIGLDVVNEQSVALGKVSGMIDNGVHSIMRVEYPATGKDGQPTTDERLIPFVGVYVKTVDQAARRIVVDWEADY.

The PRC barrel domain occupies 144–225 (ADEFYWVDLI…RIVVDWEADY (82 aa)).

Belongs to the RimM family. As to quaternary structure, binds ribosomal protein uS19.

It localises to the cytoplasm. In terms of biological role, an accessory protein needed during the final step in the assembly of 30S ribosomal subunit, possibly for assembly of the head region. Essential for efficient processing of 16S rRNA. May be needed both before and after RbfA during the maturation of 16S rRNA. It has affinity for free ribosomal 30S subunits but not for 70S ribosomes. This chain is Ribosome maturation factor RimM, found in Burkholderia lata (strain ATCC 17760 / DSM 23089 / LMG 22485 / NCIMB 9086 / R18194 / 383).